The chain runs to 213 residues: Probable elongation factor 1-beta/1-delta 1 (213 aa).

This sequence belongs to the EF-1-beta/EF-1-delta family. EF-1 is composed of 4 subunits: alpha, beta, delta, and gamma.

Functionally, EF-1-beta and EF-1-delta stimulate the exchange of GDP bound to EF-1-alpha to GTP. This chain is Probable elongation factor 1-beta/1-delta 1 (eef-1B.1), found in Caenorhabditis elegans.